We begin with the raw amino-acid sequence, 550 residues long: Carboxypeptidase Y homolog A (550 aa).

The first 18 residues, 1 to 18, serve as a signal peptide directing secretion; that stretch reads MKSLVLGLLVGSAIASGP. Positions 19 to 131 are excised as a propeptide; that stretch reads LQHVLHAPPE…KLAQYDLRIR (113 aa). 5 disulfide bridges follow: C185–C424, C319–C333, C343–C366, C350–C359, and C388–C394. A glycan (N-linked (GlcNAc...) asparagine) is linked at N216. The active site involves S272. Residue D463 is part of the active site. N-linked (GlcNAc...) asparagine glycosylation is found at N493 and N514. H525 is an active-site residue.

The protein belongs to the peptidase S10 family.

It is found in the vacuole. It carries out the reaction Release of a C-terminal amino acid with broad specificity.. In terms of biological role, vacuolar carboxypeptidase involved in degradation of small peptides. Digests preferentially peptides containing an aliphatic or hydrophobic residue in P1' position, as well as methionine, leucine or phenylalanine in P1 position of ester substrate. In Paracoccidioides lutzii (strain ATCC MYA-826 / Pb01) (Paracoccidioides brasiliensis), this protein is Carboxypeptidase Y homolog A (CPYA).